The sequence spans 459 residues: Bifunctional protein GlmU (459 aa).

A pyrophosphorylase region spans residues 1 to 229; the sequence is MSNFAIILAA…FDESLGVNDR (229 aa). Residues 8–11, K22, Q72, and 77–78 contribute to the UDP-N-acetyl-alpha-D-glucosamine site; these read LAAG and GT. D102 is a binding site for Mg(2+). UDP-N-acetyl-alpha-D-glucosamine is bound by residues G139, E154, N169, and N227. N227 provides a ligand contact to Mg(2+). The tract at residues 230–250 is linker; sequence VALATAESVMRRRINHKHMVN. Residues 251 to 459 are N-acetyltransferase; sequence GVSFVNPEAT…TRLPHHPKNQ (209 aa). 2 residues coordinate UDP-N-acetyl-alpha-D-glucosamine: R332 and K350. H362 (proton acceptor) is an active-site residue. UDP-N-acetyl-alpha-D-glucosamine contacts are provided by Y365 and N376. Acetyl-CoA is bound by residues A379, 385-386, S404, A422, and R439; that span reads NY.

This sequence in the N-terminal section; belongs to the N-acetylglucosamine-1-phosphate uridyltransferase family. It in the C-terminal section; belongs to the transferase hexapeptide repeat family. As to quaternary structure, homotrimer. Mg(2+) serves as cofactor.

The protein localises to the cytoplasm. It catalyses the reaction alpha-D-glucosamine 1-phosphate + acetyl-CoA = N-acetyl-alpha-D-glucosamine 1-phosphate + CoA + H(+). It carries out the reaction N-acetyl-alpha-D-glucosamine 1-phosphate + UTP + H(+) = UDP-N-acetyl-alpha-D-glucosamine + diphosphate. Its pathway is nucleotide-sugar biosynthesis; UDP-N-acetyl-alpha-D-glucosamine biosynthesis; N-acetyl-alpha-D-glucosamine 1-phosphate from alpha-D-glucosamine 6-phosphate (route II): step 2/2. The protein operates within nucleotide-sugar biosynthesis; UDP-N-acetyl-alpha-D-glucosamine biosynthesis; UDP-N-acetyl-alpha-D-glucosamine from N-acetyl-alpha-D-glucosamine 1-phosphate: step 1/1. It functions in the pathway bacterial outer membrane biogenesis; LPS lipid A biosynthesis. In terms of biological role, catalyzes the last two sequential reactions in the de novo biosynthetic pathway for UDP-N-acetylglucosamine (UDP-GlcNAc). The C-terminal domain catalyzes the transfer of acetyl group from acetyl coenzyme A to glucosamine-1-phosphate (GlcN-1-P) to produce N-acetylglucosamine-1-phosphate (GlcNAc-1-P), which is converted into UDP-GlcNAc by the transfer of uridine 5-monophosphate (from uridine 5-triphosphate), a reaction catalyzed by the N-terminal domain. The sequence is that of Bifunctional protein GlmU from Streptococcus pneumoniae (strain 70585).